The sequence spans 117 residues: DNA-directed RNA polymerase subunit omega (117 aa).

Residues 96–105 show a composition bias toward basic and acidic residues; sequence KEEAEEEAKQ. A disordered region spans residues 96–117; sequence KEEAEEEAKQKNSRAAKAAAAE. Residues 108–117 are compositionally biased toward low complexity; that stretch reads SRAAKAAAAE.

Belongs to the RNA polymerase subunit omega family. The RNAP catalytic core consists of 2 alpha, 1 beta, 1 beta' and 1 omega subunit. When a sigma factor is associated with the core the holoenzyme is formed, which can initiate transcription.

It catalyses the reaction RNA(n) + a ribonucleoside 5'-triphosphate = RNA(n+1) + diphosphate. Its function is as follows. Promotes RNA polymerase assembly. Latches the N- and C-terminal regions of the beta' subunit thereby facilitating its interaction with the beta and alpha subunits. In Lactococcus lactis subsp. cremoris (strain SK11), this protein is DNA-directed RNA polymerase subunit omega.